The primary structure comprises 420 residues: Gamma-glutamyl phosphate reductase (420 aa).

The protein belongs to the gamma-glutamyl phosphate reductase family.

The protein localises to the cytoplasm. It catalyses the reaction L-glutamate 5-semialdehyde + phosphate + NADP(+) = L-glutamyl 5-phosphate + NADPH + H(+). It participates in amino-acid biosynthesis; L-proline biosynthesis; L-glutamate 5-semialdehyde from L-glutamate: step 2/2. Catalyzes the NADPH-dependent reduction of L-glutamate 5-phosphate into L-glutamate 5-semialdehyde and phosphate. The product spontaneously undergoes cyclization to form 1-pyrroline-5-carboxylate. This Chlorobaculum parvum (strain DSM 263 / NCIMB 8327) (Chlorobium vibrioforme subsp. thiosulfatophilum) protein is Gamma-glutamyl phosphate reductase.